The sequence spans 414 residues: MDEILLQDPEIAKAIALESQRQMGKLELIASENIVSTAVREAQGSVLTNKYAEGYPGKRYYGGCEYVDMVETLAQERAKLLFDAQYVNVQPHSGSQANMAAYLAVLKPGDTILGMDLSHGGHLTHGSPVNFSGRLFKIISYGVQRETGRIDYDDVAAKAREHKPSVIVAGASAYPRAIDFARFRAIADEVGAKLVVDMAHIAGLVAAGLHQSPVPHAHITTTTTHKTLRGPRGGMILSTEDMGKTLNSQIFPGIQGGPLMHVIAAKAVALGEALHPAFKVYQQQVLDNAATLAACLTEAGYDLVSGGTDNHLMLVDLTSRDITGKDAEIALDTAGITVNKNTVPFETRSPFVTSGIRLGTAALTTRGMKQEHMRTVGQFIIAALEKRNDTAELEKIRKNVEEFAHQFPLFAHLA.

Residues L117 and 121-123 (GHL) each bind (6S)-5,6,7,8-tetrahydrofolate. K226 is subject to N6-(pyridoxal phosphate)lysine. 349–351 (SPF) contacts (6S)-5,6,7,8-tetrahydrofolate.

It belongs to the SHMT family. Homodimer. Pyridoxal 5'-phosphate serves as cofactor.

It localises to the cytoplasm. The catalysed reaction is (6R)-5,10-methylene-5,6,7,8-tetrahydrofolate + glycine + H2O = (6S)-5,6,7,8-tetrahydrofolate + L-serine. The protein operates within one-carbon metabolism; tetrahydrofolate interconversion. It functions in the pathway amino-acid biosynthesis; glycine biosynthesis; glycine from L-serine: step 1/1. Functionally, catalyzes the reversible interconversion of serine and glycine with tetrahydrofolate (THF) serving as the one-carbon carrier. This reaction serves as the major source of one-carbon groups required for the biosynthesis of purines, thymidylate, methionine, and other important biomolecules. Also exhibits THF-independent aldolase activity toward beta-hydroxyamino acids, producing glycine and aldehydes, via a retro-aldol mechanism. This Desulfovibrio desulfuricans (strain ATCC 27774 / DSM 6949 / MB) protein is Serine hydroxymethyltransferase.